A 921-amino-acid chain; its full sequence is Protein translocase subunit SecA (921 aa).

Residues Q86, 104 to 108 (GEGKT), and D497 contribute to the ATP site. A compositionally biased stretch (low complexity) spans 829-838 (QQAPQQQPQQ). The interval 829 to 921 (QQAPQQQPQQ…CHGAIETQKA (93 aa)) is disordered. A compositionally biased stretch (pro residues) spans 839 to 855 (VAPPPRPQPPQPAPQPP). Residues C901, C903, C912, and H913 each coordinate Zn(2+).

It belongs to the SecA family. As to quaternary structure, monomer and homodimer. Part of the essential Sec protein translocation apparatus which comprises SecA, SecYEG and auxiliary proteins SecDF-YajC and YidC. Requires Zn(2+) as cofactor.

Its subcellular location is the cell inner membrane. It is found in the cytoplasm. It catalyses the reaction ATP + H2O + cellular proteinSide 1 = ADP + phosphate + cellular proteinSide 2.. In terms of biological role, part of the Sec protein translocase complex. Interacts with the SecYEG preprotein conducting channel. Has a central role in coupling the hydrolysis of ATP to the transfer of proteins into and across the cell membrane, serving both as a receptor for the preprotein-SecB complex and as an ATP-driven molecular motor driving the stepwise translocation of polypeptide chains across the membrane. This chain is Protein translocase subunit SecA, found in Hyphomonas neptunium (strain ATCC 15444).